A 217-amino-acid chain; its full sequence is Adenylate kinase (217 aa).

11–16 (GAGKGT) provides a ligand contact to ATP. The NMP stretch occupies residues 31-60 (STGDMFREAMANETPVGLEAKSYIDKGDLV). AMP is bound by residues threonine 32, arginine 37, 58–60 (DLV), 86–89 (GFPR), and glutamine 93. The interval 127–165 (ARYICKNCGATYNKISNPTKVEGTCDRCGGHEFFQREDD) is LID. Residue arginine 128 coordinates ATP. Zn(2+)-binding residues include cysteine 131 and cysteine 134. An ATP-binding site is contributed by 137-138 (TY). Zn(2+)-binding residues include cysteine 151 and cysteine 154. The AMP site is built by arginine 162 and arginine 173. An ATP-binding site is contributed by glutamine 201.

It belongs to the adenylate kinase family. In terms of assembly, monomer.

It localises to the cytoplasm. It catalyses the reaction AMP + ATP = 2 ADP. It functions in the pathway purine metabolism; AMP biosynthesis via salvage pathway; AMP from ADP: step 1/1. Catalyzes the reversible transfer of the terminal phosphate group between ATP and AMP. Plays an important role in cellular energy homeostasis and in adenine nucleotide metabolism. This is Adenylate kinase from Lactobacillus gasseri (strain ATCC 33323 / DSM 20243 / BCRC 14619 / CIP 102991 / JCM 1131 / KCTC 3163 / NCIMB 11718 / NCTC 13722 / AM63).